The following is a 197-amino-acid chain: dTTP/UTP pyrophosphatase (197 aa).

D69 acts as the Proton acceptor in catalysis.

Belongs to the Maf family. YhdE subfamily. A divalent metal cation serves as cofactor.

The protein resides in the cytoplasm. It catalyses the reaction dTTP + H2O = dTMP + diphosphate + H(+). The catalysed reaction is UTP + H2O = UMP + diphosphate + H(+). Nucleoside triphosphate pyrophosphatase that hydrolyzes dTTP and UTP. May have a dual role in cell division arrest and in preventing the incorporation of modified nucleotides into cellular nucleic acids. The chain is dTTP/UTP pyrophosphatase from Lachnoclostridium phytofermentans (strain ATCC 700394 / DSM 18823 / ISDg) (Clostridium phytofermentans).